The following is a 324-amino-acid chain: Serine carboxypeptidase II-1 (324 aa).

N-linked (GlcNAc...) asparagine glycosylation is present at asparagine 10. Residue serine 41 is part of the active site. 2 disulfides stabilise this stretch: cysteine 109-cysteine 121 and cysteine 145-cysteine 170. The propeptide at 150 to 162 is linker peptide; the sequence is LHRRRLIKGRRPW. Asparagine 191 carries N-linked (GlcNAc...) asparagine glycosylation. Residues aspartate 239 and histidine 291 contribute to the active site.

It belongs to the peptidase S10 family. Carboxypeptidase II is a dimer, where each monomer is composed of two chains linked by a disulfide bond. In terms of processing, the linker peptide is endoproteolytically excised during enzyme maturation.

It catalyses the reaction Preferential release of a C-terminal arginine or lysine residue.. This Hordeum vulgare (Barley) protein is Serine carboxypeptidase II-1 (CXP;2-1).